A 322-amino-acid polypeptide reads, in one-letter code: 2-oxoglutarate-dependent dioxygenase caaD (322 aa).

The Fe2OG dioxygenase domain occupies 172-279 (TGNAAMFLKL…FAVPAFWHGD (108 aa)). Residues His-200, Asp-202, and His-259 each coordinate Fe cation. Arg-269 provides a ligand contact to 2-oxoglutarate.

The protein belongs to the iron/ascorbate-dependent oxidoreductase family. Requires Fe(2+) as cofactor.

It functions in the pathway secondary metabolite biosynthesis. 2-oxoglutarate-dependent dioxygenase; part of the gene cluster that produces the acyltetronic acid derivatives carlosic acid, agglomerin F and carlosic acid methyl ether. CaaD catalyzes the sequential oxidations of the terminal C-10 methyl group of the caaC product to form carboxylic acid which is necessary for the biosynthesis of agglomerin F. This chain is 2-oxoglutarate-dependent dioxygenase caaD, found in Aspergillus niger (strain ATCC MYA-4892 / CBS 513.88 / FGSC A1513).